We begin with the raw amino-acid sequence, 235 residues long: Exosome complex component RRP46 (235 aa).

Residues 1 to 13 show a composition bias toward basic and acidic residues; it reads MEEETHTDAKIRA. Residues 1-24 are disordered; the sequence is MEEETHTDAKIRAENGTGSSPRGP. Phosphoserine is present on Ser-20.

The protein belongs to the RNase PH family. As to quaternary structure, homodimer. Component of the RNA exosome core complex (Exo-9), composed of EXOSC1, EXOSC2, EXOSC3, EXOSC4, EXOSC5, EXOSC6, EXOSC7, EXOSC8 and EXOSC9; within the complex interacts with EXOSC3, EXOSC8, and EXOSC9. The catalytically inactive RNA exosome core complex (Exo-9) associates with the catalytic subunit EXOSC10/RRP6. Exo-9 may associate with DIS3 to form the nucleolar exosome complex, or DIS3L to form the cytoplasmic exosome complex. Exo-9 is formed by a hexameric base ring consisting of the heterodimers EXOSC4-EXOSC9, EXOSC5-EXOSC8 and EXOSC6-EXOSC7, and a cap ring consisting of EXOSC1, EXOSC2 and EXOSC3. The RNA exosome complex associates with cofactors C1D/RRP47, MPHOSPH6/MPP6 and MTREX/MTR4. Interacts with GTPBP1. Interacts with ZC3HAV1. Interacts with DDX17 only in the presence of ZC3HAV1 in an RNA-independent manner. As to expression, highly expressed in a variety of hematopoietic and epithelial tumor cell lines, but not in normal hematopoietic tissues or other normal tissue, with the exception of testis.

It is found in the nucleus. The protein localises to the nucleolus. Its subcellular location is the cytoplasm. Functionally, non-catalytic component of the RNA exosome complex which has 3'-&gt;5' exoribonuclease activity and participates in a multitude of cellular RNA processing and degradation events. In the nucleus, the RNA exosome complex is involved in proper maturation of stable RNA species such as rRNA, snRNA and snoRNA, in the elimination of RNA processing by-products and non-coding 'pervasive' transcripts, such as antisense RNA species and promoter-upstream transcripts (PROMPTs), and of mRNAs with processing defects, thereby limiting or excluding their export to the cytoplasm. The RNA exosome may be involved in Ig class switch recombination (CSR) and/or Ig variable region somatic hypermutation (SHM) by targeting AICDA deamination activity to transcribed dsDNA substrates. In the cytoplasm, the RNA exosome complex is involved in general mRNA turnover and specifically degrades inherently unstable mRNAs containing AU-rich elements (AREs) within their 3' untranslated regions, and in RNA surveillance pathways, preventing translation of aberrant mRNAs. It seems to be involved in degradation of histone mRNA. The catalytic inactive RNA exosome core complex of 9 subunits (Exo-9) is proposed to play a pivotal role in the binding and presentation of RNA for ribonucleolysis, and to serve as a scaffold for the association with catalytic subunits and accessory proteins or complexes. In vitro, EXOSC5 does not bind or digest single-stranded RNA and binds to double-stranded DNA without detectable DNase activity. The sequence is that of Exosome complex component RRP46 (EXOSC5) from Homo sapiens (Human).